A 428-amino-acid polypeptide reads, in one-letter code: CinA-like protein (428 aa).

It belongs to the CinA family.

The sequence is that of CinA-like protein from Mycobacterium leprae (strain TN).